Consider the following 332-residue polypeptide: Alpha-N-acetylgalactosaminide alpha-2,6-sialyltransferase 6 (332 aa).

Residues 1 to 26 (MACPRPLSQCDHTPLPGPPAGHWPLP) form a disordered region. The Cytoplasmic portion of the chain corresponds to 1–42 (MACPRPLSQCDHTPLPGPPAGHWPLPLSRRRREMKSNKEQRS). The chain crosses the membrane as a helical; Signal-anchor for type II membrane protein span at residues 43-63 (AVFVILFALITILILYSSSSA). Residues 64-332 (NEVFHYGSLR…GITFSHPSWT (269 aa)) lie on the Lumenal side of the membrane. A glycan (N-linked (GlcNAc...) asparagine) is linked at N97. C107 and C255 are oxidised to a cystine.

The protein belongs to the glycosyltransferase 29 family.

The protein localises to the golgi apparatus membrane. The enzyme catalyses a ganglioside GM1b (d18:1(4E)) + CMP-N-acetyl-beta-neuraminate = a ganglioside GD1alpha (d18:1(4E)) + CMP + H(+). The catalysed reaction is N-acetyl-alpha-neuraminosyl-(2-&gt;3)-beta-D-galactosyl-(1-&gt;3)-N-acetyl-beta-D-glucosaminyl-(1-&gt;3)-beta-D-galactosyl-(1-&gt;4)-beta-D-glucosyl-(1&lt;-&gt;1')-N-acyl-sphing-4-enine + CMP-N-acetyl-beta-neuraminate = N-acetyl-alpha-neuraminosyl-(2-&gt;3)-beta-D-galactosyl-(1-&gt;3)-[N-acetyl-alpha-neuraminosyl-(2-&gt;6)]-N-acetyl-beta-D-glucosaminyl-(1-&gt;3)-beta-D-galactosyl-(1-&gt;4)-beta-D-glucosyl-(1&lt;-&gt;1')-N-acyl-sphing-4-enine + CMP + H(+). It carries out the reaction a globoside MSGG + CMP-N-acetyl-beta-neuraminate = a globoside DSGG + CMP + H(+). It catalyses the reaction a ganglioside GD1a (d18:1(4E)) + CMP-N-acetyl-beta-neuraminate = a ganglioside GT1aalpha (d18:1(4E)) + CMP + H(+). The enzyme catalyses a ganglioside GT1b (d18:1(4E)) + CMP-N-acetyl-beta-neuraminate = a ganglioside GQ1balpha (d18:1(4E)) + CMP + H(+). The catalysed reaction is 3-O-[alpha-Neu5Ac-(2-&gt;3)-beta-D-Gal-(1-&gt;3)-alpha-D-GalNAc]-L-Ser-[protein] + CMP-N-acetyl-beta-neuraminate = a 3-O-{alpha-Neu5Ac-(2-&gt;3)-beta-D-Gal-(1-&gt;3)-[alpha-Neu5Ac-(2-&gt;6)]-alpha-D-GalNAc}-L-seryl-[protein] + CMP + H(+). It carries out the reaction 3-O-[alpha-Neu5Ac-(2-&gt;3)-beta-D-Gal-(1-&gt;3)-alpha-D-GalNAc]-L-Thr-[protein] + CMP-N-acetyl-beta-neuraminate = a 3-O-{alpha-Neu5Ac-(2-&gt;3)-beta-D-Gal-(1-&gt;3)-[alpha-Neu5Ac-(2-&gt;6)]-alpha-D-GalNAc}-L-threonyl-[protein] + CMP + H(+). Functionally, transfers the sialyl group (N-acetyl-alpha-neuraminyl or NeuAc) from CMP-NeuAc onto glycoproteins and glycolipids, forming an alpha-2,6-linkage. Produces branched type disialyl structures by transfer of a sialyl group onto the GalNAc or GlcNAc residue inside backbone core chains having a terminal sialic acid with an alpha-2,3-linkage on Gal. ST6GalNAcVI prefers glycolipids to glycoproteins, predominantly catalyzing the biosynthesis of ganglioside GD1alpha from GM1b. Besides GMb1, MSGG and other glycolipids, it shows activity towards sialyl Lc4Cer generating disialyl Lc4Cer, which can lead to the synthesis of disialyl Lewis a (Le(a)), suggested to be a cancer-associated antigen. Also has activity toward GD1a and GT1b, and can generate DSGG (disialylgalactosylgloboside) from MSGG (monosialylgalactosylgloboside). The chain is Alpha-N-acetylgalactosaminide alpha-2,6-sialyltransferase 6 (ST6GALNAC6) from Bos taurus (Bovine).